Consider the following 119-residue polypeptide: Large ribosomal subunit protein uL18 (119 aa).

It belongs to the universal ribosomal protein uL18 family. In terms of assembly, part of the 50S ribosomal subunit; part of the 5S rRNA/L5/L18/L25 subcomplex. Contacts the 5S and 23S rRNAs.

This is one of the proteins that bind and probably mediate the attachment of the 5S RNA into the large ribosomal subunit, where it forms part of the central protuberance. The chain is Large ribosomal subunit protein uL18 from Lactobacillus delbrueckii subsp. bulgaricus (strain ATCC 11842 / DSM 20081 / BCRC 10696 / JCM 1002 / NBRC 13953 / NCIMB 11778 / NCTC 12712 / WDCM 00102 / Lb 14).